Reading from the N-terminus, the 260-residue chain is Ribosomal RNA small subunit methyltransferase G (260 aa).

S-adenosyl-L-methionine contacts are provided by residues Gly-94, Phe-99, 117–119 (DST), 145–146 (AE), and Arg-164. Residues 236-260 (APTPPPYPRSPGTPKRQPLGQSNRP) are disordered. A compositionally biased stretch (pro residues) spans 237–246 (PTPPPYPRSP).

The protein belongs to the methyltransferase superfamily. RNA methyltransferase RsmG family.

It is found in the cytoplasm. Its function is as follows. Specifically methylates the N7 position of a guanine in 16S rRNA. The sequence is that of Ribosomal RNA small subunit methyltransferase G from Synechococcus sp. (strain JA-2-3B'a(2-13)) (Cyanobacteria bacterium Yellowstone B-Prime).